The chain runs to 358 residues: Plastoglobulin-1, chloroplastic (358 aa).

The transit peptide at 1-47 (MALLSSTLRAPLVFSKNPKPVSLSSLHSRIYLSPRSPRFPSLRFISA) directs the protein to the chloroplast. Positions 48 to 114 (AGDTGDAEKP…NDAGNGTPTF (67 aa)) are disordered.

This sequence belongs to the PAP/fibrillin family.

It is found in the plastid. Its subcellular location is the chloroplast. Functionally, may form together with other plastoglobulins a coat on the surface of the lipoprotein particle. The coat may contain receptors for attachment to the thylakoid membrane as well as regulatory proteins that may function in the transfer of lipids to and from the thylakoid membranes. This chain is Plastoglobulin-1, chloroplastic (PG1), found in Pisum sativum (Garden pea).